The following is an 864-amino-acid chain: uncharacterized protein (864 aa).

This is an uncharacterized protein from Rickettsia typhi (strain ATCC VR-144 / Wilmington).